The chain runs to 216 residues: Pyrophosphatase PpaX (216 aa).

Aspartate 9 (nucleophile) is an active-site residue.

It belongs to the HAD-like hydrolase superfamily. PpaX family. The cofactor is Mg(2+).

The catalysed reaction is diphosphate + H2O = 2 phosphate + H(+). Functionally, hydrolyzes pyrophosphate formed during P-Ser-HPr dephosphorylation by HPrK/P. Might play a role in controlling the intracellular pyrophosphate pool. The sequence is that of Pyrophosphatase PpaX from Bacillus anthracis (strain CDC 684 / NRRL 3495).